The following is a 525-amino-acid chain: Sucrose transport protein (525 aa).

The Cytoplasmic segment spans residues 1–37 (MAGRNIKNGENNKIAGSSLHLEKNPTTPPEAEATLKK). Helical transmembrane passes span 38–58 (LGLV…QLSL), 72–92 (WAAY…PLVG), 107–127 (PFIA…GFAA), 145–165 (AIAV…TLQG), 184–204 (YANA…YAAG), 230–250 (SCFF…LSVV), 295–315 (MLIL…FLLF), 338–358 (GVHA…VMSL), 373–393 (LWGI…LVTK), 422–442 (LAIF…PFAL), 455–475 (GLSL…VSVT), and 488–508 (LPAF…SFTL). Over 509 to 525 (LPSPPPEAKIGGSMGGH) the chain is Cytoplasmic.

The protein belongs to the glycoside-pentoside-hexuronide (GPH) cation symporter transporter (TC 2.A.2.4) family.

It is found in the membrane. Its pathway is glycan biosynthesis; sucrose metabolism. Its function is as follows. Responsible for the transport of sucrose into the cell, with the concomitant uptake of protons (symport system). Can also transport maltose at a lesser rate. This chain is Sucrose transport protein, found in Spinacia oleracea (Spinach).